Consider the following 109-residue polypeptide: MAASLLLRQGRAGALKTVLLEAGVFRGVAPAVSLSAESGKNEKGLPPNPKKQSPPKKPVSAAPTEPFDNTTYKNLQHHDYSTYTFLDLNLDLSKFRMPQPSSGRESPRH.

The transit peptide at 1 to 34 (MAASLLLRQGRAGALKTVLLEAGVFRGVAPAVSL) directs the protein to the mitochondrion. Residues 33-72 (SLSAESGKNEKGLPPNPKKQSPPKKPVSAAPTEPFDNTTY) form a disordered region. Ser-106 is modified (phosphoserine).

This sequence belongs to the complex I NDUFV3 subunit family. In terms of assembly, complex I is composed of 45 different subunits. This is a component of the flavoprotein-sulfur (FP) fragment of the enzyme.

Its subcellular location is the mitochondrion inner membrane. Accessory subunit of the mitochondrial membrane respiratory chain NADH dehydrogenase (Complex I), that is believed not to be involved in catalysis. Complex I functions in the transfer of electrons from NADH to the respiratory chain. The immediate electron acceptor for the enzyme is believed to be ubiquinone. May be the terminally assembled subunit of Complex I. The chain is NADH dehydrogenase [ubiquinone] flavoprotein 3, mitochondrial (NDUFV3) from Bos taurus (Bovine).